A 298-amino-acid chain; its full sequence is Quinolinate synthase (298 aa).

Iminosuccinate is bound by residues H19 and S36. A [4Fe-4S] cluster-binding site is contributed by C81. Iminosuccinate-binding positions include 107-109 (YVN) and S124. Residue C168 participates in [4Fe-4S] cluster binding. Iminosuccinate is bound by residues 193-195 (HPE) and T210. C254 lines the [4Fe-4S] cluster pocket.

Belongs to the quinolinate synthase family. Type 2 subfamily. It depends on [4Fe-4S] cluster as a cofactor.

Its subcellular location is the cytoplasm. It catalyses the reaction iminosuccinate + dihydroxyacetone phosphate = quinolinate + phosphate + 2 H2O + H(+). It participates in cofactor biosynthesis; NAD(+) biosynthesis; quinolinate from iminoaspartate: step 1/1. Functionally, catalyzes the condensation of iminoaspartate with dihydroxyacetone phosphate to form quinolinate. The chain is Quinolinate synthase from Thermotoga sp. (strain RQ2).